The following is a 203-amino-acid chain: tRNA (guanine-N(7)-)-methyltransferase (203 aa).

Residues Glu-34, Glu-59, Asp-86, and Asp-107 each coordinate S-adenosyl-L-methionine. The active site involves Asp-107. Substrate is bound by residues Lys-111, Asp-143, and Thr-181–Glu-184.

It belongs to the class I-like SAM-binding methyltransferase superfamily. TrmB family.

It carries out the reaction guanosine(46) in tRNA + S-adenosyl-L-methionine = N(7)-methylguanosine(46) in tRNA + S-adenosyl-L-homocysteine. It functions in the pathway tRNA modification; N(7)-methylguanine-tRNA biosynthesis. Its function is as follows. Catalyzes the formation of N(7)-methylguanine at position 46 (m7G46) in tRNA. This is tRNA (guanine-N(7)-)-methyltransferase from Mycoplasmopsis pulmonis (strain UAB CTIP) (Mycoplasma pulmonis).